The chain runs to 242 residues: UPF0309 protein Oant_1457 (242 aa).

The SIS domain occupies 30–214; the sequence is AAELITAAAL…AKLVGKGDAP (185 aa).

The protein belongs to the UPF0309 family.

The polypeptide is UPF0309 protein Oant_1457 (Brucella anthropi (strain ATCC 49188 / DSM 6882 / CCUG 24695 / JCM 21032 / LMG 3331 / NBRC 15819 / NCTC 12168 / Alc 37) (Ochrobactrum anthropi)).